Consider the following 39-residue polypeptide: U1-nemetoxin-Csp1c (39 aa).

4 disulfides stabilise this stretch: Cys-1/Cys-15, Cys-8/Cys-19, Cys-14/Cys-36, and Cys-25/Cys-32.

As to expression, expressed by the venom gland.

The protein localises to the secreted. Its function is as follows. Causes paralysis to insect larvae (H.virescens). This toxin is active only on insects. This is U1-nemetoxin-Csp1c from Calisoga sp. (Spider).